The chain runs to 702 residues: Elongation factor G (702 aa).

The region spanning 8–286 (DKVRNIGIIA…AVVEYLPSPL (279 aa)) is the tr-type G domain. GTP contacts are provided by residues 17–24 (AHIDAGKT), 85–89 (DTPGH), and 139–142 (NKMD).

This sequence belongs to the TRAFAC class translation factor GTPase superfamily. Classic translation factor GTPase family. EF-G/EF-2 subfamily.

The protein resides in the cytoplasm. In terms of biological role, catalyzes the GTP-dependent ribosomal translocation step during translation elongation. During this step, the ribosome changes from the pre-translocational (PRE) to the post-translocational (POST) state as the newly formed A-site-bound peptidyl-tRNA and P-site-bound deacylated tRNA move to the P and E sites, respectively. Catalyzes the coordinated movement of the two tRNA molecules, the mRNA and conformational changes in the ribosome. The protein is Elongation factor G of Chloroflexus aurantiacus (strain ATCC 29366 / DSM 635 / J-10-fl).